The primary structure comprises 332 residues: MAVEPLRVLVTGAAGQIGYALVPMIARGVMLGANQPVILHMLDIPPAAEALNGVKMELVDAAFPLLKGVVATTDVAEACKGVNVAVMVGGFPRKEGMERKDVMPKNVSIYKSQASALEQYAAPNCKVLVVANPANTNALILKEFAPSIPEKNITCLTRLDHNRALGQISERLNAQVSDVKNVIIWGNHSSSQYPDVNPCTVKTGSGEKAVRELVADDAWLNGEFITTVQQRGAAIIKARKLSSALSAASSACDHIRDWVLGTPEGTWVSMGVYSDGSYNVPAGIIYSFPVTCKDGEWKIVQGLPIDEVSRQKMDATGAELVEEKALAYSCLT.

NAD(+)-binding positions include 16–17, D43, and G90; that span reads QI. R99 is a binding site for oxaloacetate. Positions 113 and 132 each coordinate NAD(+). 4 residues coordinate oxaloacetate: N132, R163, H188, and S243. H188 functions as the Proton acceptor in the catalytic mechanism.

Belongs to the LDH/MDH superfamily. MDH type 2 family. Homodimer.

The protein resides in the cytoplasm. It carries out the reaction (S)-malate + NAD(+) = oxaloacetate + NADH + H(+). The sequence is that of Malate dehydrogenase, cytoplasmic (NR1) from Beta vulgaris (Sugar beet).